We begin with the raw amino-acid sequence, 314 residues long: Homoserine O-succinyltransferase (314 aa).

The active-site Acyl-thioester intermediate is C142. Substrate is bound by residues K163 and S192. H235 functions as the Proton acceptor in the catalytic mechanism. E237 is a catalytic residue. R249 contacts substrate.

The protein belongs to the MetA family.

The protein resides in the cytoplasm. The enzyme catalyses L-homoserine + succinyl-CoA = O-succinyl-L-homoserine + CoA. Its pathway is amino-acid biosynthesis; L-methionine biosynthesis via de novo pathway; O-succinyl-L-homoserine from L-homoserine: step 1/1. Functionally, transfers a succinyl group from succinyl-CoA to L-homoserine, forming succinyl-L-homoserine. In Shewanella woodyi (strain ATCC 51908 / MS32), this protein is Homoserine O-succinyltransferase.